Reading from the N-terminus, the 306-residue chain is uncharacterized protein (306 aa).

This is an uncharacterized protein from Treponema pallidum (strain Nichols).